Consider the following 393-residue polypeptide: NAD(P)H-quinone oxidoreductase subunit H, chloroplastic (393 aa).

The protein belongs to the complex I 49 kDa subunit family. NDH is composed of at least 16 different subunits, 5 of which are encoded in the nucleus.

The protein localises to the plastid. It localises to the chloroplast thylakoid membrane. The catalysed reaction is a plastoquinone + NADH + (n+1) H(+)(in) = a plastoquinol + NAD(+) + n H(+)(out). It carries out the reaction a plastoquinone + NADPH + (n+1) H(+)(in) = a plastoquinol + NADP(+) + n H(+)(out). Functionally, NDH shuttles electrons from NAD(P)H:plastoquinone, via FMN and iron-sulfur (Fe-S) centers, to quinones in the photosynthetic chain and possibly in a chloroplast respiratory chain. The immediate electron acceptor for the enzyme in this species is believed to be plastoquinone. Couples the redox reaction to proton translocation, and thus conserves the redox energy in a proton gradient. In Zygnema circumcarinatum (Green alga), this protein is NAD(P)H-quinone oxidoreductase subunit H, chloroplastic.